The primary structure comprises 107 residues: High mobility group protein HMG-I/HMG-Y (107 aa).

Over residues 1 to 13 (MSESVSKSSQPLA) the composition is skewed to polar residues. The interval 1 to 107 (MSESVSKSSQ…ISQESSEEEQ (107 aa)) is disordered. Ser2 bears the N-acetylserine mark. At Lys7 the chain carries N6-acetyllysine. At Ser8 the chain carries ADP-ribosylserine. Ser9 carries the ADP-ribosylserine; alternate modification. Ser9 carries the phosphoserine; alternate modification. Residue Lys15 is modified to N6-acetyllysine; alternate. A Glycyl lysine isopeptide (Lys-Gly) (interchain with G-Cter in SUMO2); alternate cross-link involves residue Lys15. Residues 15–24 (KQEKDGTEKR) show a composition bias toward basic and acidic residues. Positions 21–31 (TEKRGRGRPRK) form a DNA-binding region, a.T hook 1. Position 26 is an asymmetric dimethylarginine; alternate (Arg26). Residue Arg26 is modified to Omega-N-methylarginine; alternate. Arg26 carries the symmetric dimethylarginine; alternate modification. Residue Ser36 is modified to Phosphoserine; by HIPK2 and CDC2. Phosphothreonine is present on Thr39. A phosphoserine mark is found at Ser44 and Ser49. Thr53 carries the phosphothreonine; by HIPK2 and CDC2 modification. DNA-binding regions (a.T hook) lie at residues 53–63 (TPKRPRGRPKG) and 78–89 (TPGRKPRGRPKK). The interval 53 to 77 (TPKRPRGRPKGSKNKGTAKTRKVTT) is interaction with HIPK2. Residues 55 to 74 (KRPRGRPKGSKNKGTAKTRK) show a composition bias toward basic residues. An asymmetric dimethylarginine; by PRMT6; alternate mark is found at Arg58 and Arg60. An omega-N-methylarginine; by PRMT6; alternate mark is found at Arg58 and Arg60. At Thr78 the chain carries Phosphothreonine; by HIPK2 and CDC2. Acidic residues predominate over residues 93–107 (EEEEGISQESSEEEQ). 3 positions are modified to phosphoserine: Ser99, Ser102, and Ser103.

Belongs to the HMGA family. As to quaternary structure, interacts with HIPK2. Isoforms HMG-I and HMG-Y can be phosphorylated by HIPK2. Phosphorylation may modulate DNA-binding affinity. In terms of processing, methylation at Arg-58 is mutually exclusive with methylation at Arg-60.

The protein resides in the nucleus. It localises to the chromosome. HMG-I/Y bind preferentially to the minor groove of A+T rich regions in double-stranded DNA. It is suggested that these proteins could function in nucleosome phasing and in the 3'-end processing of mRNA transcripts. They are also involved in the transcription regulation of genes containing, or in close proximity to A+T-rich regions. This Rattus norvegicus (Rat) protein is High mobility group protein HMG-I/HMG-Y (Hmga1).